Reading from the N-terminus, the 171-residue chain is Ribosome maturation factor RimM (171 aa).

The PRC barrel domain occupies 97–169; it reads DGEFYYHEII…RVDVDIMEGL (73 aa).

This sequence belongs to the RimM family. In terms of assembly, binds ribosomal protein uS19.

Its subcellular location is the cytoplasm. Its function is as follows. An accessory protein needed during the final step in the assembly of 30S ribosomal subunit, possibly for assembly of the head region. Essential for efficient processing of 16S rRNA. May be needed both before and after RbfA during the maturation of 16S rRNA. It has affinity for free ribosomal 30S subunits but not for 70S ribosomes. This is Ribosome maturation factor RimM from Lactococcus lactis subsp. cremoris (strain MG1363).